A 309-amino-acid polypeptide reads, in one-letter code: MAEFGISPGQLVAVFCDKSSSEEALKKLVGRVQGLTGSEGQVFVENITQLLQSAHKESSFDVILSGIVPGSTSLHSPEALADMARILRPGGCLFLKEPVETTGVNNDKIKTASKLCSALTLSGLVEIKELQREALSPEEAQSMQEHLGYHSDSLLSVHVTGKKPNFEVGSSSQLKLLHKKSSSVKPVVDPATAKLWTLSANDMEDDSMDLIDSDELLDPEDLKKPDPASLKAPSCGEGKKRKACKNCTCGLAEELEKEQSKAQSSQPKSACGNCYLGDAFRCANCPYLGMPAFKPGEQVLLSSSNLQDA.

Residues isoleucine 6–serine 172 are N-terminal SAM-like domain. The segment at glutamine 173 to leucine 222 is linker. Phosphoserine is present on residues serine 182, serine 183, and serine 213. Cysteine 235, cysteine 244, cysteine 247, and cysteine 249 together coordinate [2Fe-2S] cluster. Positions cysteine 235–cysteine 249 are fe-S binding site A. Position 269 is a phosphoserine (serine 269). 4 residues coordinate [4Fe-4S] cluster: cysteine 271, cysteine 274, cysteine 282, and cysteine 285. 2 consecutive short sequence motifs (cx2C motif) follow at residues cysteine 271–cysteine 274 and cysteine 282–cysteine 285. The segment at cysteine 271–cysteine 285 is fe-S binding site B. Phosphoserine occurs at positions 302 and 304.

It belongs to the anamorsin family. In terms of assembly, monomer. Interacts with NDOR1. Interacts with CHCHD4. [2Fe-2S] cluster serves as cofactor. Requires [4Fe-4S] cluster as cofactor.

It localises to the cytoplasm. It is found in the nucleus. The protein localises to the mitochondrion intermembrane space. Its function is as follows. Component of the cytosolic iron-sulfur (Fe-S) protein assembly (CIA) machinery required for the maturation of extramitochondrial Fe-S proteins. Part of an electron transfer chain functioning in an early step of cytosolic Fe-S biogenesis, facilitating the de novo assembly of a [4Fe-4S] cluster on the scaffold complex NUBP1-NUBP2. Electrons are transferred to CIAPIN1 from NADPH via the FAD- and FMN-containing protein NDOR1. NDOR1-CIAPIN1 are also required for the assembly of the diferric tyrosyl radical cofactor of ribonucleotide reductase (RNR), probably by providing electrons for reduction during radical cofactor maturation in the catalytic small subunit. Has anti-apoptotic effects in the cell. Involved in negative control of cell death upon cytokine withdrawal. Promotes development of hematopoietic cells. This is Anamorsin from Rattus norvegicus (Rat).